A 118-amino-acid polypeptide reads, in one-letter code: Large ribosomal subunit protein bL19 (118 aa).

The protein belongs to the bacterial ribosomal protein bL19 family.

Functionally, this protein is located at the 30S-50S ribosomal subunit interface and may play a role in the structure and function of the aminoacyl-tRNA binding site. The chain is Large ribosomal subunit protein bL19 from Campylobacter fetus subsp. fetus (strain 82-40).